We begin with the raw amino-acid sequence, 186 residues long: CRS2-like protein, chloroplastic (186 aa).

Residues 1 to 49 (MAMTAASVFGSGGCLELLTSSKAMRGKLWTRLAPFISKRHASTSQTSLS) constitute a chloroplast transit peptide. TRNA is bound at residue Tyr73. His78 functions as the Proton acceptor in the catalytic mechanism. TRNA contacts are provided by Tyr123, Asn125, and Asn171.

It belongs to the PTH family.

It is found in the plastid. It localises to the chloroplast. This is CRS2-like protein, chloroplastic from Oryza sativa subsp. japonica (Rice).